Consider the following 146-residue polypeptide: Globin (146 aa).

An N-acetylalanine modification is found at Ala1. Positions 1–146 constitute a Globin domain; the sequence is ALSAAEAEVV…IIDAMKKAGK (146 aa). His95 lines the heme b pocket.

The protein belongs to the globin family. In terms of assembly, monomer.

The chain is Globin from Dolabella auricularia (Shoulderblade sea cat).